The chain runs to 490 residues: Glutamate--tRNA ligase (490 aa).

A 'HIGH' region motif is present at residues P12–L22. A 'KMSKS' region motif is present at residues K256–R260. K259 is a binding site for ATP.

This sequence belongs to the class-I aminoacyl-tRNA synthetase family. Glutamate--tRNA ligase type 1 subfamily. In terms of assembly, monomer.

The protein localises to the cytoplasm. It catalyses the reaction tRNA(Glu) + L-glutamate + ATP = L-glutamyl-tRNA(Glu) + AMP + diphosphate. Functionally, catalyzes the attachment of glutamate to tRNA(Glu) in a two-step reaction: glutamate is first activated by ATP to form Glu-AMP and then transferred to the acceptor end of tRNA(Glu). This Mycobacterium sp. (strain JLS) protein is Glutamate--tRNA ligase.